Reading from the N-terminus, the 245-residue chain is 1-(5-phosphoribosyl)-5-[(5-phosphoribosylamino)methylideneamino] imidazole-4-carboxamide isomerase (245 aa).

Catalysis depends on aspartate 7, which acts as the Proton acceptor. The active-site Proton donor is the aspartate 129.

The protein belongs to the HisA/HisF family.

The protein resides in the cytoplasm. The catalysed reaction is 1-(5-phospho-beta-D-ribosyl)-5-[(5-phospho-beta-D-ribosylamino)methylideneamino]imidazole-4-carboxamide = 5-[(5-phospho-1-deoxy-D-ribulos-1-ylimino)methylamino]-1-(5-phospho-beta-D-ribosyl)imidazole-4-carboxamide. Its pathway is amino-acid biosynthesis; L-histidine biosynthesis; L-histidine from 5-phospho-alpha-D-ribose 1-diphosphate: step 4/9. This Salmonella dublin (strain CT_02021853) protein is 1-(5-phosphoribosyl)-5-[(5-phosphoribosylamino)methylideneamino] imidazole-4-carboxamide isomerase.